Here is a 296-residue protein sequence, read N- to C-terminus: Elongation factor Ts (296 aa).

Residues 79 to 82 are involved in Mg(2+) ion dislocation from EF-Tu; it reads TDFV.

It belongs to the EF-Ts family.

The protein resides in the cytoplasm. Associates with the EF-Tu.GDP complex and induces the exchange of GDP to GTP. It remains bound to the aminoacyl-tRNA.EF-Tu.GTP complex up to the GTP hydrolysis stage on the ribosome. This is Elongation factor Ts (tsf) from Spiroplasma citri.